The sequence spans 238 residues: Probable transcriptional regulatory protein TC_0742 (238 aa).

Residues 1–21 form a disordered region; it reads MAGHSKWANTKHRKERADHKK. Basic residues predominate over residues 9–21; sequence NTKHRKERADHKK.

It belongs to the TACO1 family.

Its subcellular location is the cytoplasm. The protein is Probable transcriptional regulatory protein TC_0742 of Chlamydia muridarum (strain MoPn / Nigg).